We begin with the raw amino-acid sequence, 354 residues long: Long form salivary protein D7L3 (354 aa).

Residues 1-26 form the signal peptide; that stretch reads MQLTPRSVHLVHLLLAATTLISPSWS.

The protein belongs to the PBP/GOBP family.

It is found in the secreted. Modulates blood feeding of female mosquitoes on vertebrate species by binding and sequestering different mediators involved in the host response. Binds serotonin with high affinity. Binds weakly noradrenaline and histamine. Does not bind tryptamine, octopamine, dopamine, adrenaline, leukotriene C4, leukotriene D4, leukotriene B4, ADP and U-46619, a stable analog of thromboxane A2. Inhibits agonist-induced platelet aggregation. Exhibits vasodilating activity. The polypeptide is Long form salivary protein D7L3 (Anopheles gambiae (African malaria mosquito)).